Reading from the N-terminus, the 1100-residue chain is Sorbin and SH3 domain-containing protein 2 (1100 aa).

A phosphoserine mark is found at Y13, S14, H27, G28, S30, and S43. Polar residues predominate over residues 30-52; that stretch reads SLDSTDTYPQHAQSLDGTTSSSI. A disordered region spans residues 30–57; sequence SLDSTDTYPQHAQSLDGTTSSSIPLYRS. A SoHo domain is found at 66–127; sequence VIKAPHYPGI…YNTPYTYNAG (62 aa). Residues 134-147 are compositionally biased toward polar residues; the sequence is SAQSHPAAKTQTYR. The interval 134-311 is disordered; sequence SAQSHPAAKT…SPSRAKGGDD (178 aa). H153 is subject to Alanine amide. S154 and S157 each carry phosphoserine. A compositionally biased stretch (pro residues) spans 167–180; the sequence is PVPPPHVPPPVPPL. Basic and acidic residues predominate over residues 181 to 217; sequence RPRDRSSTEKHDWDPPDRKVDTRKFRSEPRSIFEYEP. Phosphothreonine is present on residues S234 and I236. Phosphoserine is present on residues S239, S245, S248, K258, S259, and E260. T277, G280, and V282 each carry phosphothreonine. The residue at position 287 (S287) is a Phosphoserine. Low complexity predominate over residues 287 to 304; it reads SSTTLTKSFTSSSPSSPS. A Phosphothreonine modification is found at T292. Residues F295, S297, S298, S299, S301, S302, S304, A306, D311, and P316 each carry the phosphoserine modification. Residues S320, S322, and G326 each carry the phosphothreonine modification. Phosphoserine occurs at positions 341, 344, and 346. E366 bears the Phosphothreonine mark. Phosphoserine occurs at positions 381 and 383. Phosphothreonine is present on residues D413 and K415. Phosphoserine occurs at positions 437 and 439. I459 carries the phosphothreonine modification. Phosphoserine is present on residues K474, S494, S497, S550, and S750. The interval 807 to 866 is disordered; the sequence is RMPRSASFQDVDTANSSCHHQDRGGALQDRESPRSYSSTLTDMGRSAPRERRGTPEKEKL. The segment covering 812 to 824 has biased composition (polar residues); it reads ASFQDVDTANSSC. Residues 825-839 show a composition bias toward basic and acidic residues; the sequence is HHQDRGGALQDRESP. S843 carries the phosphoserine modification. The span at 853–866 shows a compositional bias: basic and acidic residues; it reads APRERRGTPEKEKL. SH3 domains are found at residues 863–922 and 938–999; these read KEKL…KLTP and GEIG…VVKK. Phosphoserine occurs at positions 1017 and 1023. In terms of domain architecture, SH3 3 spans 1041 to 1100; sequence GGGEPFQALYNYTPRNEDELELRESDVIDVMEKCDDGWFVGTSRRTKFFGTFPGNYVKRL.

As to quaternary structure, interacts with ABL, CBL, DNM1, DNM2, FLOT1, AFDN, PTK2B/PYK2, SAPAP, SPTAN1, SYNJ1, SYNJ2, VCL/vinculin and WASF. Interacts with ABL1/c-Abl, ABL2/v-Abl/Arg, ACTN, CBL and PALLD. Interacts with PTPN12 and WASF1 via its SH3 domains; this interaction may mediate the partial PTPN12 and WASF1 translocation to focal adhesion sites. Ubiquitinated by CBL. In terms of processing, dephosphorylated by PTPN12. Abundantly expressed in heart. In cardiac muscle cells, located in the Z-disks of sarcomere. Also found, but to a lower extent, in small and large intestine, pancreas, thymus, colon, spleen, prostate, testis, brain, ovary and epithelial cells. In the pancreas, mainly expressed in acinar cells, duct cells and all cell types in islets (at protein level). Tends to be down-regulated in pancreatic adenocarcinomas ans metastases.

It is found in the cytoplasm. The protein resides in the perinuclear region. The protein localises to the apical cell membrane. It localises to the cell junction. Its subcellular location is the focal adhesion. It is found in the cell projection. The protein resides in the lamellipodium. Adapter protein that plays a role in the assembling of signaling complexes, being a link between ABL kinases and actin cytoskeleton. Can form complex with ABL1 and CBL, thus promoting ubiquitination and degradation of ABL1. May play a role in the regulation of pancreatic cell adhesion, possibly by acting on WASF1 phosphorylation, enhancing phosphorylation by ABL1, as well as dephosphorylation by PTPN12. Isoform 6 increases water and sodium absorption in the intestine and gall-bladder. This chain is Sorbin and SH3 domain-containing protein 2 (SORBS2), found in Homo sapiens (Human).